Consider the following 158-residue polypeptide: 6,7-dimethyl-8-ribityllumazine synthase (158 aa).

5-amino-6-(D-ribitylamino)uracil contacts are provided by residues phenylalanine 22, 56 to 58, and 80 to 82; these read ALE and VVI. A (2S)-2-hydroxy-3-oxobutyl phosphate-binding site is contributed by 85 to 86; sequence ET. Catalysis depends on histidine 88, which acts as the Proton donor. Residue asparagine 113 participates in 5-amino-6-(D-ribitylamino)uracil binding. Arginine 127 provides a ligand contact to (2S)-2-hydroxy-3-oxobutyl phosphate.

The protein belongs to the DMRL synthase family.

The enzyme catalyses (2S)-2-hydroxy-3-oxobutyl phosphate + 5-amino-6-(D-ribitylamino)uracil = 6,7-dimethyl-8-(1-D-ribityl)lumazine + phosphate + 2 H2O + H(+). It functions in the pathway cofactor biosynthesis; riboflavin biosynthesis; riboflavin from 2-hydroxy-3-oxobutyl phosphate and 5-amino-6-(D-ribitylamino)uracil: step 1/2. Catalyzes the formation of 6,7-dimethyl-8-ribityllumazine by condensation of 5-amino-6-(D-ribitylamino)uracil with 3,4-dihydroxy-2-butanone 4-phosphate. This is the penultimate step in the biosynthesis of riboflavin. This Neisseria gonorrhoeae (strain ATCC 700825 / FA 1090) protein is 6,7-dimethyl-8-ribityllumazine synthase.